The chain runs to 339 residues: DNA-directed RNA polymerase subunit alpha (339 aa).

An alpha N-terminal domain (alpha-NTD) region spans residues methionine 1 to glutamate 233. The interval lysine 264–phenylalanine 339 is alpha C-terminal domain (alpha-CTD).

This sequence belongs to the RNA polymerase alpha chain family. In terms of assembly, in plastids the minimal PEP RNA polymerase catalytic core is composed of four subunits: alpha, beta, beta', and beta''. When a (nuclear-encoded) sigma factor is associated with the core the holoenzyme is formed, which can initiate transcription.

It localises to the plastid. The protein resides in the chloroplast. The catalysed reaction is RNA(n) + a ribonucleoside 5'-triphosphate = RNA(n+1) + diphosphate. Functionally, DNA-dependent RNA polymerase catalyzes the transcription of DNA into RNA using the four ribonucleoside triphosphates as substrates. This chain is DNA-directed RNA polymerase subunit alpha, found in Psathyrostachys stoloniformis.